Here is an 812-residue protein sequence, read N- to C-terminus: Valine--tRNA ligase (812 aa).

The 'HIGH' region signature appears at 46–56 (PTVSGQLHIGH). The 'KMSKS' region motif lies at 536 to 540 (KMSKS). Lys-539 lines the ATP pocket.

Belongs to the class-I aminoacyl-tRNA synthetase family. ValS type 2 subfamily. In terms of assembly, monomer.

The protein localises to the cytoplasm. It carries out the reaction tRNA(Val) + L-valine + ATP = L-valyl-tRNA(Val) + AMP + diphosphate. Functionally, catalyzes the attachment of valine to tRNA(Val). As ValRS can inadvertently accommodate and process structurally similar amino acids such as threonine, to avoid such errors, it has a 'posttransfer' editing activity that hydrolyzes mischarged Thr-tRNA(Val) in a tRNA-dependent manner. This chain is Valine--tRNA ligase, found in Rickettsia conorii (strain ATCC VR-613 / Malish 7).